A 634-amino-acid polypeptide reads, in one-letter code: Glutamyl-tRNA(Gln) amidotransferase subunit E (634 aa).

It belongs to the GatB/GatE family. GatE subfamily. Heterodimer of GatD and GatE.

It carries out the reaction L-glutamyl-tRNA(Gln) + L-glutamine + ATP + H2O = L-glutaminyl-tRNA(Gln) + L-glutamate + ADP + phosphate + H(+). Allows the formation of correctly charged Gln-tRNA(Gln) through the transamidation of misacylated Glu-tRNA(Gln) in organisms which lack glutaminyl-tRNA synthetase. The reaction takes place in the presence of glutamine and ATP through an activated gamma-phospho-Glu-tRNA(Gln). The GatDE system is specific for glutamate and does not act on aspartate. In Sulfolobus acidocaldarius (strain ATCC 33909 / DSM 639 / JCM 8929 / NBRC 15157 / NCIMB 11770), this protein is Glutamyl-tRNA(Gln) amidotransferase subunit E.